The chain runs to 292 residues: Selenate reductase subunit B (292 aa).

The segment at residues 1–43 (MGSKETKNTSRRDFLIKGAGAAALGAGAFAISQVPLLEKLASA) is a signal peptide (tat-type signal). 3 consecutive 4Fe-4S ferredoxin-type domains span residues 84 to 113 (WIMVIDLKKCVGCSSCTVACVSENVLPPGV), 129 to 160 (VTKKFTPRPCMQCEHPPCTKVCPIGATYKSED), and 161 to 190 (GIVAIDYDKCIGCRYCITACPYGARTFDWG). Positions 93, 96, 99, 103, 138, 141, 146, 150, 170, 173, 176, 180, 230, 233, 245, and 249 each coordinate [4Fe-4S] cluster.

As to quaternary structure, the complex is composed of three subunits: SrdA, SrdB and SrdC. Requires [4Fe-4S] cluster as cofactor. Predicted to be exported by the Tat system. The position of the signal peptide cleavage has not been experimentally proven.

It localises to the secreted. The enzyme catalyses selenite + a quinone + H2O = selenate + a quinol. Functionally, component of the respiratory selenate reductase complex, which catalyzes the reduction of selenate to selenite. This subunit probably transfers electrons from SrdC to SrdA. The protein is Selenate reductase subunit B of Mesobacillus selenatarsenatis (strain DSM 18680 / JCM 14380 / FERM P-15431 / SF-1).